The following is a 285-amino-acid chain: Nucleotide-binding protein NTHI1314 (285 aa).

8–15 (GRSGAGKS) contributes to the ATP binding site. 56 to 59 (DIRN) serves as a coordination point for GTP.

This sequence belongs to the RapZ-like family.

Displays ATPase and GTPase activities. This is Nucleotide-binding protein NTHI1314 from Haemophilus influenzae (strain 86-028NP).